The chain runs to 404 residues: Phosphopentomutase (404 aa).

6 residues coordinate Mn(2+): Asp-10, Asp-303, His-308, Asp-344, His-345, and His-356.

Belongs to the phosphopentomutase family. Requires Mn(2+) as cofactor.

The protein localises to the cytoplasm. It carries out the reaction 2-deoxy-alpha-D-ribose 1-phosphate = 2-deoxy-D-ribose 5-phosphate. The enzyme catalyses alpha-D-ribose 1-phosphate = D-ribose 5-phosphate. The protein operates within carbohydrate degradation; 2-deoxy-D-ribose 1-phosphate degradation; D-glyceraldehyde 3-phosphate and acetaldehyde from 2-deoxy-alpha-D-ribose 1-phosphate: step 1/2. Its function is as follows. Isomerase that catalyzes the conversion of deoxy-ribose 1-phosphate (dRib-1-P) and ribose 1-phosphate (Rib-1-P) to deoxy-ribose 5-phosphate (dRib-5-P) and ribose 5-phosphate (Rib-5-P), respectively. In Shewanella sp. (strain W3-18-1), this protein is Phosphopentomutase.